The following is an 86-amino-acid chain: Large ribosomal subunit protein bL27 (86 aa).

Residues 1–10 are compositionally biased toward gly residues; the sequence is MAQKKGGGST. The interval 1–20 is disordered; the sequence is MAQKKGGGSTRNGRDSESKR.

The protein belongs to the bacterial ribosomal protein bL27 family.

The chain is Large ribosomal subunit protein bL27 from Bordetella parapertussis (strain 12822 / ATCC BAA-587 / NCTC 13253).